A 277-amino-acid polypeptide reads, in one-letter code: Collectin-10 (277 aa).

The first 27 residues, 1 to 27 (MSRKKEQQLRKYGTLVVLFIFQVQIFG), serve as a signal peptide directing secretion. The interval 41–82 (THTILPGPKGDDGEKGDRGEVGKQGKVGPKGPKGNKGTVGDV) is disordered. Basic and acidic residues predominate over residues 49–63 (KGDDGEKGDRGEVGK). The region spanning 56–115 (GDRGEVGKQGKVGPKGPKGNKGTVGDVGDQGMLGKIGPIGGKGDKGAKGISGVSGKKGKA) is the Collagen-like domain. Low complexity predominate over residues 64-79 (QGKVGPKGPKGNKGTV). One can recognise a C-type lectin domain in the interval 155 to 271 (TDEKFYYIVK…CQVTIYFICE (117 aa)). 2 disulfides stabilise this stretch: Cys176–Cys270 and Cys248–Cys262. A glycan (N-linked (GlcNAc...) asparagine) is linked at Asn258.

Belongs to the COLEC10/COLEC11 family. Widely expressed. Highly expressed in lung. Weakly expressed in larynx, syrinx and cranial air sac. Expressed throughout the lower gastrointestinal tract in increasing levels starting from a faint signal in duodenum and ending with relatively high signals in proctodeum, coprodeum and urodeum. In the upper part of the gastrointestinal tract, expressed in tongue, crop, and mucosa of the crop.

Its subcellular location is the secreted. It localises to the golgi apparatus. The protein resides in the cytoplasm. Its function is as follows. Lectin that binds to various sugars: galactose &gt; mannose = fucose &gt; N-acetylglucosamine &gt; N-acetylgalactosamine. Acts as a chemoattractant, probably involved in the regulation of cell migration. The chain is Collectin-10 (COLEC10) from Gallus gallus (Chicken).